The chain runs to 236 residues: Ribose-5-phosphate isomerase A (236 aa).

Substrate is bound by residues Thr28 to Thr31, Asp83 to Asp86, and Lys96 to Gly99. Glu105 acts as the Proton acceptor in catalysis. Lys123 lines the substrate pocket.

Belongs to the ribose 5-phosphate isomerase family. Homodimer.

The catalysed reaction is aldehydo-D-ribose 5-phosphate = D-ribulose 5-phosphate. The protein operates within carbohydrate degradation; pentose phosphate pathway; D-ribose 5-phosphate from D-ribulose 5-phosphate (non-oxidative stage): step 1/1. In terms of biological role, catalyzes the reversible conversion of ribose-5-phosphate to ribulose 5-phosphate. In Methylorubrum populi (strain ATCC BAA-705 / NCIMB 13946 / BJ001) (Methylobacterium populi), this protein is Ribose-5-phosphate isomerase A.